We begin with the raw amino-acid sequence, 347 residues long: tRNA pseudouridine synthase D (347 aa).

Residue Asp-81 is the Nucleophile of the active site. The TRUD domain occupies 158–305 (GVPNYFGSQR…RHDRREIALK (148 aa)).

Belongs to the pseudouridine synthase TruD family.

The enzyme catalyses uridine(13) in tRNA = pseudouridine(13) in tRNA. Its function is as follows. Responsible for synthesis of pseudouridine from uracil-13 in transfer RNAs. The chain is tRNA pseudouridine synthase D from Vibrio parahaemolyticus serotype O3:K6 (strain RIMD 2210633).